Here is a 335-residue protein sequence, read N- to C-terminus: Capsular polysaccharide phosphotransferase WcwK (335 aa).

The protein belongs to the stealth family.

This is Capsular polysaccharide phosphotransferase WcwK (wcwK) from Streptococcus pneumoniae.